We begin with the raw amino-acid sequence, 397 residues long: 1-deoxy-D-xylulose 5-phosphate reductoisomerase (397 aa).

8 residues coordinate NADPH: Thr12, Gly13, Ser14, Ile15, Gly38, Lys39, Asn40, and Asn126. Lys127 provides a ligand contact to 1-deoxy-D-xylulose 5-phosphate. Residue Glu128 coordinates NADPH. Position 152 (Asp152) interacts with Mn(2+). Ser153, Glu154, Ser188, and His211 together coordinate 1-deoxy-D-xylulose 5-phosphate. Mn(2+) is bound at residue Glu154. NADPH is bound at residue Gly217. 1-deoxy-D-xylulose 5-phosphate is bound by residues Ser224, Asn229, Lys230, and Glu233. Glu233 is a Mn(2+) binding site.

This sequence belongs to the DXR family. Requires Mg(2+) as cofactor. Mn(2+) serves as cofactor.

It catalyses the reaction 2-C-methyl-D-erythritol 4-phosphate + NADP(+) = 1-deoxy-D-xylulose 5-phosphate + NADPH + H(+). Its pathway is isoprenoid biosynthesis; isopentenyl diphosphate biosynthesis via DXP pathway; isopentenyl diphosphate from 1-deoxy-D-xylulose 5-phosphate: step 1/6. Catalyzes the NADPH-dependent rearrangement and reduction of 1-deoxy-D-xylulose-5-phosphate (DXP) to 2-C-methyl-D-erythritol 4-phosphate (MEP). The sequence is that of 1-deoxy-D-xylulose 5-phosphate reductoisomerase from Haemophilus influenzae (strain 86-028NP).